A 407-amino-acid chain; its full sequence is MMLNSGDTAWMLISTALVILMTVPGVAMFYSGLTKRENVLNTIFLSFVSLGIVSLLWFLFGYGLIFGGDVSGIIGSHQVGISLINLGSASKYAPTIPEGLFAIFQMTFAAITVALISGAVVERIKFSSWILFIPLWFALVYVPVAHWVWGGGFLQNLGVHDFAGGIVVHITSGIAALALALVTGPRYDQKLMPHHLGYSVIGTGLLWFGWFGFNAGSALSAGSLAANAMIVTNTSAAAGMIGWILMDRLKTGKPTLLGALSGAVAGLASITPAAGFVDIGASIVTGLVAAVICYLAVSWLKPAAGYDDALDVFGIHGVSGIIGTLGVGLFAVPALNPSLTSGGLLTGSTSLLVSQLIGVVTVTVYTFVVTYILAMLLMKFKGLRVEREEEIQGLDINLHEETGYRLT.

The next 12 helical transmembrane spans lie at 9–29, 47–67, 70–90, 101–121, 129–149, 162–182, 196–216, 226–246, 257–277, 279–299, 312–332, and 357–377; these read AWMLISTALVILMTVPGVAMF, FVSLGIVSLLWFLFGYGLIFG, VSGIIGSHQVGISLINLGSAS, FAIFQMTFAAITVALISGAVV, WILFIPLWFALVYVPVAHWVW, FAGGIVVHITSGIAALALALV, LGYSVIGTGLLWFGWFGFNAG, ANAMIVTNTSAAAGMIGWILM, LGALSGAVAGLASITPAAGFV, IGASIVTGLVAAVICYLAVSW, VFGIHGVSGIIGTLGVGLFAV, and IGVVTVTVYTFVVTYILAMLL.

Belongs to the ammonia transporter channel (TC 1.A.11.2) family.

Its subcellular location is the cell membrane. The sequence is that of Putative ammonium transporter MTH_661 from Methanothermobacter thermautotrophicus (strain ATCC 29096 / DSM 1053 / JCM 10044 / NBRC 100330 / Delta H) (Methanobacterium thermoautotrophicum).